The primary structure comprises 687 residues: Guanine-nucleotide exchange factor YEL1 (687 aa).

Over residues 14-27 the composition is skewed to polar residues; sequence YGVSQKGYNDNFSE. 2 disordered regions span residues 14–35 and 63–97; these read YGVSQKGYNDNFSESEGVLHGS and AANDEKPVIPTTDTATAGTGTEDISSTQSEETDQN. An SEC7 domain is found at 57–264; it reads ILQNKEAAND…SEYYKTLNET (208 aa). Over residues 73 to 83 the composition is skewed to low complexity; that stretch reads TTDTATAGTGT. Thr-290 bears the Phosphothreonine mark. Ser-293 and Ser-299 each carry phosphoserine. Positions 412 to 551 constitute a PH domain; the sequence is ASRRTSLSYL…DCINFWAGRI (140 aa).

This sequence belongs to the YEL1 family.

Its subcellular location is the cytoplasm. The protein resides in the cell membrane. It is found in the bud neck. It localises to the bud tip. Its function is as follows. Guanine nucleotide exchange factor for ARF3 required for localization of ARF3 to the bud neck and tip and involved in actin patch polarization. The sequence is that of Guanine-nucleotide exchange factor YEL1 (YEL1) from Saccharomyces cerevisiae (strain RM11-1a) (Baker's yeast).